A 616-amino-acid polypeptide reads, in one-letter code: MPKYRSATTTHGRNMAGARALWRATGMTDADFGKPIIAVVNSFTQFVPGHVHLRDLGKLVAEQIEAAGGVAKEFNTIAVDDGIAMGHGGMLYSLPSRELIADSVEYMVNAHCADAMVCISNCDKITPGMLMASLRLNIPVIFVSGGPMEAGKTKLSDQIIKLDLVDAMIQGADPKVSDSQSDQVERSACPTCGSCSGMFTANSMNCLTEALGLSQPGNGSLLATHADRKQLFLNAGKRIVELTKRYYEQNDESALPRNIASKAAFENAMTLDIAMGGSTNTVLHLLAAAQEAEIDFTMSDIDKLSRKVPQLCKVAPSTQKYHMEDVHRAGGVIGILGELDRAGLLNRDVKNVLGLTLPQTLEQYDVMLTQDDAVKNMFRAGPAGIRTTQAFSQDCRWDSLDDDRANGCIRSLEHAYSKDGGLAVLYGNFAENGCIVKTAGVDDSILKFTGPAKVYESQDDAVEAILGGKVVAGDVVVIRYEGPKGGPGMQEMLYPTSFLKSMGLGKACALITDGRFSGGTSGLSIGHVSPEAASGGSIGLIEDGDLIAIDIPNRGIQLQVSDAELAARREAQDARGDKAWTPKNRERQVSFALRAYASLATSADKGAVRDKSKLGG.

Aspartate 81 contributes to the Mg(2+) binding site. A [2Fe-2S] cluster-binding site is contributed by cysteine 122. Mg(2+) is bound by residues aspartate 123 and lysine 124. Lysine 124 is modified (N6-carboxylysine). Cysteine 195 contacts [2Fe-2S] cluster. Glutamate 491 is a Mg(2+) binding site. Serine 517 (proton acceptor) is an active-site residue.

It belongs to the IlvD/Edd family. As to quaternary structure, homodimer. [2Fe-2S] cluster is required as a cofactor. Mg(2+) serves as cofactor.

The enzyme catalyses (2R)-2,3-dihydroxy-3-methylbutanoate = 3-methyl-2-oxobutanoate + H2O. It carries out the reaction (2R,3R)-2,3-dihydroxy-3-methylpentanoate = (S)-3-methyl-2-oxopentanoate + H2O. Its pathway is amino-acid biosynthesis; L-isoleucine biosynthesis; L-isoleucine from 2-oxobutanoate: step 3/4. It participates in amino-acid biosynthesis; L-valine biosynthesis; L-valine from pyruvate: step 3/4. Functionally, functions in the biosynthesis of branched-chain amino acids. Catalyzes the dehydration of (2R,3R)-2,3-dihydroxy-3-methylpentanoate (2,3-dihydroxy-3-methylvalerate) into 2-oxo-3-methylpentanoate (2-oxo-3-methylvalerate) and of (2R)-2,3-dihydroxy-3-methylbutanoate (2,3-dihydroxyisovalerate) into 2-oxo-3-methylbutanoate (2-oxoisovalerate), the penultimate precursor to L-isoleucine and L-valine, respectively. The sequence is that of Dihydroxy-acid dehydratase from Escherichia coli (strain 55989 / EAEC).